The following is a 238-amino-acid chain: Fatty acid metabolism regulator protein (238 aa).

The region spanning 6–74 is the HTH gntR-type domain; that stretch reads QSPAGFAEEY…HGKPTKVNNF (69 aa). Residues 34 to 53 constitute a DNA-binding region (H-T-H motif); the sequence is ERELSELIGVTRTTLREVLQ.

As to quaternary structure, homodimer.

The protein resides in the cytoplasm. Multifunctional regulator of fatty acid metabolism. The protein is Fatty acid metabolism regulator protein of Erwinia tasmaniensis (strain DSM 17950 / CFBP 7177 / CIP 109463 / NCPPB 4357 / Et1/99).